The following is a 129-amino-acid chain: Histone H2A (129 aa).

Belongs to the histone H2A family. As to quaternary structure, the nucleosome is a histone octamer containing two molecules each of H2A, H2B, H3 and H4 assembled in one H3-H4 heterotetramer and two H2A-H2B heterodimers. The octamer wraps approximately 147 bp of DNA.

Its subcellular location is the nucleus. It localises to the chromosome. Core component of nucleosome. Nucleosomes wrap and compact DNA into chromatin, limiting DNA accessibility to the cellular machineries which require DNA as a template. Histones thereby play a central role in transcription regulation, DNA repair, DNA replication and chromosomal stability. DNA accessibility is regulated via a complex set of post-translational modifications of histones, also called histone code, and nucleosome remodeling. The polypeptide is Histone H2A (H2A-II) (Chlamydomonas reinhardtii (Chlamydomonas smithii)).